A 622-amino-acid chain; its full sequence is Chaperone protein DnaK (622 aa).

A Phosphothreonine; by autocatalysis modification is found at Thr-197. Composition is skewed to basic and acidic residues over residues 515–528 (LHKE…EAVE) and 575–614 (ASKE…KKDD). Disordered regions lie at residues 515 to 537 (LHKE…DSLV) and 575 to 622 (ASKE…AEVE).

It belongs to the heat shock protein 70 family.

Functionally, acts as a chaperone. In Campylobacter lari (strain RM2100 / D67 / ATCC BAA-1060), this protein is Chaperone protein DnaK.